A 396-amino-acid polypeptide reads, in one-letter code: S-adenosylmethionine synthase 1 (396 aa).

Glu-12 is a binding site for Mg(2+). His-18 provides a ligand contact to ATP. Position 46 (Glu-46) interacts with K(+). Residues Glu-59 and Gln-102 each contribute to the L-methionine site. Residues 170 to 172 (DGK), 238 to 241 (SGRF), Asp-249, 255 to 256 (RK), Ala-272, Lys-276, and Lys-280 each bind ATP. Asp-249 contacts L-methionine. Lys-280 contributes to the L-methionine binding site.

The protein belongs to the AdoMet synthase family. Homotetramer. The cofactor is Mn(2+). Requires Mg(2+) as cofactor. It depends on Co(2+) as a cofactor. K(+) is required as a cofactor.

The protein localises to the cytoplasm. The catalysed reaction is L-methionine + ATP + H2O = S-adenosyl-L-methionine + phosphate + diphosphate. It participates in amino-acid biosynthesis; S-adenosyl-L-methionine biosynthesis; S-adenosyl-L-methionine from L-methionine: step 1/1. Catalyzes the formation of S-adenosylmethionine from methionine and ATP. The reaction comprises two steps that are both catalyzed by the same enzyme: formation of S-adenosylmethionine (AdoMet) and triphosphate, and subsequent hydrolysis of the triphosphate. The polypeptide is S-adenosylmethionine synthase 1 (SAM1) (Oryza sativa subsp. japonica (Rice)).